The primary structure comprises 166 residues: Bud site selection protein 20 (166 aa).

The Nuclear localization signal signature appears at 7 to 16; the sequence is KRYKTKRRTR. The nuclear export signal-like (NES-like) stretch occupies residues 17 to 31; it reads DLDLIYNDLSTKESV. Residues 49–73 form a C2H2-type zinc finger; the sequence is HYCIHCAKYMETAIALKTHLKGKVH.

This sequence belongs to the ZNF593/BUD20 C2H2-type zinc-finger protein family. In terms of assembly, associates with pre-60S ribosomal particles; released from the pre-60S particle very early in the cytoplasm.

Its subcellular location is the nucleus. The protein localises to the cytoplasm. Its function is as follows. Involved in pre-60S ribosomal particles maturation by promoting the nuclear export of the 60S ribosome. Involved in positioning the proximal bud pole signal. The protein is Bud site selection protein 20 of Saccharomyces cerevisiae (strain ATCC 204508 / S288c) (Baker's yeast).